The primary structure comprises 260 residues: NH(3)-dependent NAD(+) synthetase (260 aa).

An ATP-binding site is contributed by 31–38 (GLSGGLDS). Asp-37 is a binding site for Mg(2+). Arg-112 lines the deamido-NAD(+) pocket. Thr-132 lines the ATP pocket. Glu-137 is a Mg(2+) binding site. Residues Lys-161 and Ser-183 each coordinate ATP.

It belongs to the NAD synthetase family. As to quaternary structure, homodimer.

The enzyme catalyses deamido-NAD(+) + NH4(+) + ATP = AMP + diphosphate + NAD(+) + H(+). The protein operates within cofactor biosynthesis; NAD(+) biosynthesis; NAD(+) from deamido-NAD(+) (ammonia route): step 1/1. Its function is as follows. Catalyzes the ATP-dependent amidation of deamido-NAD to form NAD. Uses ammonia as a nitrogen source. This Helicobacter pylori (strain G27) protein is NH(3)-dependent NAD(+) synthetase.